Reading from the N-terminus, the 376-residue chain is Chaperone protein DnaJ (376 aa).

In terms of domain architecture, J spans 5 to 72 (DFYEVLGVPK…QKRAAYDQYG (68 aa)). The segment at 136–214 (GKEAQIRIPS…CHGQGRVKKQ (79 aa)) adopts a CR-type zinc-finger fold. The Zn(2+) site is built by Cys149, Cys152, Cys166, Cys169, Cys188, Cys191, Cys202, and Cys205. 4 CXXCXGXG motif repeats span residues 149 to 156 (CETCHGSG), 166 to 173 (CGTCQGSG), 188 to 195 (CPHCRGTG), and 202 to 209 (CTACHGQG). Disordered regions lie at residues 227-246 (DGMR…GGPP) and 352-376 (SLKK…SFFS). Over residues 237 to 246 (GEPGTNGGPP) the composition is skewed to gly residues. Residues 367-376 (WTDRLKSFFS) show a composition bias toward basic and acidic residues.

This sequence belongs to the DnaJ family. As to quaternary structure, homodimer. Requires Zn(2+) as cofactor.

It localises to the cytoplasm. Its function is as follows. Participates actively in the response to hyperosmotic and heat shock by preventing the aggregation of stress-denatured proteins and by disaggregating proteins, also in an autonomous, DnaK-independent fashion. Unfolded proteins bind initially to DnaJ; upon interaction with the DnaJ-bound protein, DnaK hydrolyzes its bound ATP, resulting in the formation of a stable complex. GrpE releases ADP from DnaK; ATP binding to DnaK triggers the release of the substrate protein, thus completing the reaction cycle. Several rounds of ATP-dependent interactions between DnaJ, DnaK and GrpE are required for fully efficient folding. Also involved, together with DnaK and GrpE, in the DNA replication of plasmids through activation of initiation proteins. The polypeptide is Chaperone protein DnaJ (Acidovorax sp. (strain JS42)).